We begin with the raw amino-acid sequence, 302 residues long: MIAANFLLNLFLYPILIKLFRRRRIGQYIRKEGPDLHGYKEGTPTMGGILFVLTGFLFGMISKTTTMVLLGMFLFFLIGFLDDFLSVVRKDSTGLKTYQKALLQTLSALIMLLLIRPETNVDFFGFTIEMGKWYYLFALLVIVGSSNAMNLTDGLDGLAGWIYVSGSIPYWFFLKERGVSEDILLILGAGVLAFLVFNSKPAKIFMGDTGSITLGGVLGTVSVLTKTEFYLVLFFLIPVIETLSVILQVGSFKIFKRRIFRMSPLHHHFELIGWSEEKIVAVFTVFNLISSLVVLEIFGVIA.

A run of 9 helical transmembrane segments spans residues 1–21 (MIAA…KLFR), 42–62 (GTPT…GMIS), 68–88 (VLLG…LSVV), 123–143 (FFGF…LVIV), 154–174 (GLDG…WFFL), 178–198 (GVSE…LVFN), 204–224 (IFMG…VSVL), 229–249 (FYLV…ILQV), and 279–299 (IVAV…EIFG).

Belongs to the glycosyltransferase 4 family. MraY subfamily. It depends on Mg(2+) as a cofactor.

The protein resides in the cell inner membrane. It carries out the reaction UDP-N-acetyl-alpha-D-muramoyl-L-alanyl-gamma-D-glutamyl-meso-2,6-diaminopimeloyl-D-alanyl-D-alanine + di-trans,octa-cis-undecaprenyl phosphate = di-trans,octa-cis-undecaprenyl diphospho-N-acetyl-alpha-D-muramoyl-L-alanyl-D-glutamyl-meso-2,6-diaminopimeloyl-D-alanyl-D-alanine + UMP. The protein operates within cell wall biogenesis; peptidoglycan biosynthesis. Functionally, catalyzes the initial step of the lipid cycle reactions in the biosynthesis of the cell wall peptidoglycan: transfers peptidoglycan precursor phospho-MurNAc-pentapeptide from UDP-MurNAc-pentapeptide onto the lipid carrier undecaprenyl phosphate, yielding undecaprenyl-pyrophosphoryl-MurNAc-pentapeptide, known as lipid I. The sequence is that of Phospho-N-acetylmuramoyl-pentapeptide-transferase from Thermotoga petrophila (strain ATCC BAA-488 / DSM 13995 / JCM 10881 / RKU-1).